We begin with the raw amino-acid sequence, 738 residues long: Glucan 1,4-alpha-glucosidase SusB (738 aa).

A signal peptide spans 1–21 (MKKRKILSLIAFLCISFIANA). Position 194 (E194) interacts with Ca(2+). Substrate-binding positions include 215–217 (PNS), 437–439 (HHE), and 507–508 (HE). Ca(2+)-binding residues include E508, E526, and E532. E532 functions as the Proton donor/acceptor in the catalytic mechanism.

Belongs to the glycosyl hydrolase 97 family. In terms of assembly, monomer. The cofactor is Ca(2+).

The protein resides in the periplasm. The enzyme catalyses Hydrolysis of terminal (1-&gt;4)-linked alpha-D-glucose residues successively from non-reducing ends of the chains with release of beta-D-glucose.. It functions in the pathway glycan degradation; starch degradation. Its function is as follows. Glucoamylase that hydrolyzes alpha-1,4-glucosidic linkages, alpha-1,6-, alpha-1,3- and alpha-1,2-glucosidic linkages during starch degradation. This chain is Glucan 1,4-alpha-glucosidase SusB (susB), found in Bacteroides thetaiotaomicron (strain ATCC 29148 / DSM 2079 / JCM 5827 / CCUG 10774 / NCTC 10582 / VPI-5482 / E50).